A 256-amino-acid polypeptide reads, in one-letter code: 6-carboxyhexanoate--CoA ligase (256 aa).

The protein belongs to the BioW family. Homodimer. It depends on Mg(2+) as a cofactor.

The catalysed reaction is heptanedioate + ATP + CoA = 6-carboxyhexanoyl-CoA + AMP + diphosphate. The protein operates within metabolic intermediate metabolism; pimeloyl-CoA biosynthesis; pimeloyl-CoA from pimelate: step 1/1. Catalyzes the transformation of pimelate into pimeloyl-CoA with concomitant hydrolysis of ATP to AMP. The sequence is that of 6-carboxyhexanoate--CoA ligase from Methanobrevibacter ruminantium (strain ATCC 35063 / DSM 1093 / JCM 13430 / OCM 146 / M1) (Methanobacterium ruminantium).